The sequence spans 435 residues: RuBisCO large subunit-binding protein subunit beta-1 (435 aa).

Belongs to the chaperonin (HSP60) family. In terms of assembly, oligomer of probably six alpha and six beta subunits.

It localises to the plastid. It is found in the chloroplast. Functionally, this protein binds RuBisCO small and large subunits and is implicated in the assembly of the enzyme oligomer. The polypeptide is RuBisCO large subunit-binding protein subunit beta-1 (Chlamydomonas reinhardtii (Chlamydomonas smithii)).